Reading from the N-terminus, the 358-residue chain is Alanine racemase (358 aa).

Lys35 serves as the catalytic Proton acceptor; specific for D-alanine. N6-(pyridoxal phosphate)lysine is present on Lys35. Residue Arg130 coordinates substrate. Tyr255 serves as the catalytic Proton acceptor; specific for L-alanine. Residue Met303 coordinates substrate.

The protein belongs to the alanine racemase family. Pyridoxal 5'-phosphate serves as cofactor.

The catalysed reaction is L-alanine = D-alanine. The protein operates within amino-acid biosynthesis; D-alanine biosynthesis; D-alanine from L-alanine: step 1/1. Its function is as follows. Catalyzes the interconversion of L-alanine and D-alanine. May also act on other amino acids. This Shewanella oneidensis (strain ATCC 700550 / JCM 31522 / CIP 106686 / LMG 19005 / NCIMB 14063 / MR-1) protein is Alanine racemase (alr).